The primary structure comprises 153 residues: Myosin regulatory light chain (153 aa).

Alanine 1 is subject to Blocked amino end (Ala). 2 consecutive EF-hand domains span residues 15 to 50 (KQIQEMKEAFSMIDVDRDGFVSKDDIKAISEQLGRT) and 81 to 116 (DSEETIRNAFAMFDEQENKKLNIEYIKDLLEDMGNN). Residues aspartate 28, aspartate 30, aspartate 32, and aspartate 39 each contribute to the Ca(2+) site.

Its function is as follows. In molluscan muscle, calcium regulation is associated with myosin rather than with actin. Muscle myosin contains two types of light chains: the catalytic light chain, essential for ATPase activity, and the regulatory light chain, a calcium-binding protein responsible for Ca(2+) dependent binding and Ca(2+) dependent Mg-ATPase activity. In Patinopecten sp. (Scallop), this protein is Myosin regulatory light chain.